The sequence spans 85 residues: uncharacterized protein (85 aa).

Belongs to the YciI family.

This is an uncharacterized protein from Bacillus subtilis (strain 168).